The sequence spans 517 residues: Probable protein phosphatase 2C 20 (517 aa).

The tract at residues 1-59 (MWVMQGERRRARAPWGPPDTGGALLERWISRERRSDSRDASGSAKQRSAMGNSLPVESK) is disordered. A compositionally biased stretch (basic and acidic residues) spans 28 to 39 (WISRERRSDSRD). The 304-residue stretch at 70-373 (KYVVSSMQGW…DNTTVILVLF (304 aa)) folds into the PPM-type phosphatase domain. Positions 105, 106, 323, and 364 each coordinate Mn(2+). The segment at 380-517 (AVPPVDTDTD…PPHDDTYHRW (138 aa)) is disordered. Over residues 402–414 (GSNNATASDNNDP) the composition is skewed to polar residues. Residues 438–455 (DATATAVGSSSTTAVAAD) show a composition bias toward low complexity. The span at 499–517 (LPRSNPDKSPPHDDTYHRW) shows a compositional bias: basic and acidic residues.

Belongs to the PP2C family. Requires Mg(2+) as cofactor. It depends on Mn(2+) as a cofactor.

The enzyme catalyses O-phospho-L-seryl-[protein] + H2O = L-seryl-[protein] + phosphate. It carries out the reaction O-phospho-L-threonyl-[protein] + H2O = L-threonyl-[protein] + phosphate. This Oryza sativa subsp. japonica (Rice) protein is Probable protein phosphatase 2C 20.